The primary structure comprises 194 residues: Peptidyl-tRNA hydrolase (194 aa).

Position 16 (Tyr-16) interacts with tRNA. His-21 acts as the Proton acceptor in catalysis. Positions 67, 69, and 115 each coordinate tRNA.

Belongs to the PTH family. In terms of assembly, monomer.

It is found in the cytoplasm. It catalyses the reaction an N-acyl-L-alpha-aminoacyl-tRNA + H2O = an N-acyl-L-amino acid + a tRNA + H(+). Hydrolyzes ribosome-free peptidyl-tRNAs (with 1 or more amino acids incorporated), which drop off the ribosome during protein synthesis, or as a result of ribosome stalling. In terms of biological role, catalyzes the release of premature peptidyl moieties from peptidyl-tRNA molecules trapped in stalled 50S ribosomal subunits, and thus maintains levels of free tRNAs and 50S ribosomes. This is Peptidyl-tRNA hydrolase from Sodalis glossinidius (strain morsitans).